The chain runs to 89 residues: Small ribosomal subunit protein bS20 (89 aa).

Disordered regions lie at residues 1-25 (MANI…ASMK) and 69-89 (KNAA…IQAS). Basic residues predominate over residues 7-20 (AIKRAKTSEKRRAH).

This sequence belongs to the bacterial ribosomal protein bS20 family.

Functionally, binds directly to 16S ribosomal RNA. The polypeptide is Small ribosomal subunit protein bS20 (Geobacillus kaustophilus (strain HTA426)).